Here is a 251-residue protein sequence, read N- to C-terminus: Hydroxyacylglutathione hydrolase (251 aa).

Zn(2+)-binding residues include His53, His55, Asp57, His58, His110, Asp127, and His165.

It belongs to the metallo-beta-lactamase superfamily. Glyoxalase II family. Monomer. The cofactor is Zn(2+).

The enzyme catalyses an S-(2-hydroxyacyl)glutathione + H2O = a 2-hydroxy carboxylate + glutathione + H(+). It functions in the pathway secondary metabolite metabolism; methylglyoxal degradation; (R)-lactate from methylglyoxal: step 2/2. Functionally, thiolesterase that catalyzes the hydrolysis of S-D-lactoyl-glutathione to form glutathione and D-lactic acid. The polypeptide is Hydroxyacylglutathione hydrolase (Salmonella gallinarum (strain 287/91 / NCTC 13346)).